A 162-amino-acid polypeptide reads, in one-letter code: UPF0114 protein Sfri_3655 (162 aa).

The next 3 membrane-spanning stretches (helical) occupy residues 15-35, 53-73, and 136-156; these read IMAP…IKFF, LVLI…LIMV, and IMWY…MGYL.

The protein belongs to the UPF0114 family.

It is found in the cell membrane. The polypeptide is UPF0114 protein Sfri_3655 (Shewanella frigidimarina (strain NCIMB 400)).